The sequence spans 341 residues: Probable cytosolic iron-sulfur protein assembly protein Ciao1 (341 aa).

WD repeat units follow at residues 12–51 (GHAG…RWVA), 58–97 (GHTR…FECN), 102–141 (GHDN…DQED), 151–190 (GHTQ…SEWE), 197–236 (SHSS…NALG), 255–294 (YHSR…DRNE), and 305–341 (AHSQ…VDAD).

The protein belongs to the WD repeat CIA1 family.

In terms of biological role, essential component of the cytosolic iron-sulfur (Fe/S) protein assembly machinery. Required for the maturation of extramitochondrial Fe/S proteins. The protein is Probable cytosolic iron-sulfur protein assembly protein Ciao1 of Anopheles gambiae (African malaria mosquito).